Reading from the N-terminus, the 93-residue chain is Small integral membrane protein 36 (93 aa).

The chain crosses the membrane as a helical span at residues 14-34 (LIILVASYVILLLVFLVSCVL). A disordered region spans residues 70–93 (SHWARGPSLHLKDPAPLGKKSTVV).

The protein localises to the membrane. This is Small integral membrane protein 36 from Mus musculus (Mouse).